The primary structure comprises 231 residues: L-ribulose-5-phosphate 4-epimerase (231 aa).

Residues 27–28 (GN), 44–45 (SG), and 73–74 (SS) each bind substrate. The Zn(2+) site is built by aspartate 75, histidine 94, and histidine 96. The active-site Proton donor/acceptor is the aspartate 119. Residue histidine 168 coordinates Zn(2+). Tyrosine 226 serves as the catalytic Proton donor/acceptor.

Belongs to the aldolase class II family. AraD/FucA subfamily. Zn(2+) is required as a cofactor.

It carries out the reaction L-ribulose 5-phosphate = D-xylulose 5-phosphate. The protein operates within carbohydrate degradation; L-arabinose degradation via L-ribulose; D-xylulose 5-phosphate from L-arabinose (bacterial route): step 3/3. Its function is as follows. Involved in the degradation of L-arabinose. Catalyzes the interconversion of L-ribulose 5-phosphate (LRu5P) and D-xylulose 5-phosphate (D-Xu5P) via a retroaldol/aldol mechanism (carbon-carbon bond cleavage analogous to a class II aldolase reaction). This chain is L-ribulose-5-phosphate 4-epimerase (araD), found in Halalkalibacterium halodurans (strain ATCC BAA-125 / DSM 18197 / FERM 7344 / JCM 9153 / C-125) (Bacillus halodurans).